The primary structure comprises 247 residues: Exosome complex component Rrp4 (247 aa).

The region spanning 70–143 is the S1 motif domain; the sequence is GDTVIGLIED…INPILSIKGK (74 aa). The region spanning 149 to 211 is the KH domain; it reads SSGIVIDIPP…EALVEAIQII (63 aa).

The protein belongs to the RRP4 family. In terms of assembly, component of the archaeal exosome complex. Forms a trimer of Rrp4 and/or Csl4 subunits. The trimer associates with a hexameric ring-like arrangement composed of 3 Rrp41-Rrp42 heterodimers.

It is found in the cytoplasm. Its function is as follows. Non-catalytic component of the exosome, which is a complex involved in RNA degradation. Increases the RNA binding and the efficiency of RNA degradation. Confers strong poly(A) specificity to the exosome. In Sulfurisphaera tokodaii (strain DSM 16993 / JCM 10545 / NBRC 100140 / 7) (Sulfolobus tokodaii), this protein is Exosome complex component Rrp4.